The chain runs to 226 residues: V-type proton ATPase subunit E 1 (226 aa).

Ala-2 bears the N-acetylalanine mark. The residue at position 56 (Tyr-56) is a Phosphotyrosine.

It belongs to the V-ATPase E subunit family. In terms of assembly, V-ATPase is a heteromultimeric enzyme made up of two complexes: the ATP-hydrolytic V1 complex and the proton translocation V0 complex. The V1 complex consists of three catalytic AB heterodimers that form a heterohexamer, three peripheral stalks each consisting of EG heterodimers, one central rotor including subunits D and F, and the regulatory subunits C and H. The proton translocation complex V0 consists of the proton transport subunit a, a ring of proteolipid subunits c9c'', rotary subunit d, subunits e and f, and the accessory subunits ATP6AP1/Ac45 and ATP6AP2/PRR. Interacts with RABL2/RABL2A; binds preferentially to GTP-bound RABL2. Interacts with ALDOC. Interacts with RAB11B. Expressed in brain (at protein level).

The protein localises to the apical cell membrane. The protein resides in the cytoplasmic vesicle. It is found in the secretory vesicle. Its subcellular location is the synaptic vesicle membrane. It localises to the clathrin-coated vesicle membrane. Its function is as follows. Subunit of the V1 complex of vacuolar(H+)-ATPase (V-ATPase), a multisubunit enzyme composed of a peripheral complex (V1) that hydrolyzes ATP and a membrane integral complex (V0) that translocates protons. V-ATPase is responsible for acidifying and maintaining the pH of intracellular compartments and in some cell types, is targeted to the plasma membrane, where it is responsible for acidifying the extracellular environment. This chain is V-type proton ATPase subunit E 1 (Atp6v1e1), found in Rattus norvegicus (Rat).